Consider the following 228-residue polypeptide: RNA-free ribonuclease P (228 aa).

The protein belongs to the HARP family.

The catalysed reaction is Endonucleolytic cleavage of RNA, removing 5'-extranucleotides from tRNA precursor.. RNA-free RNase P that catalyzes the removal of the 5'-leader sequence from pre-tRNA to produce the mature 5'-terminus. This is RNA-free ribonuclease P from Methanopyrus kandleri (strain AV19 / DSM 6324 / JCM 9639 / NBRC 100938).